We begin with the raw amino-acid sequence, 149 residues long: Glutamate mutase sigma subunit (149 aa).

In terms of domain architecture, B12-binding spans Lys-3–Val-140. Residues Ala-13–Ala-17, His-16, Ser-61–Ile-63, and Asn-93–Gly-97 contribute to the adenosylcob(III)alamin site.

It belongs to the methylaspartate mutase GlmS subunit family. In terms of assembly, heterotetramer composed of 2 epsilon subunits (GlmE) and 2 sigma subunits (GlmS). GlmE exists as a homodimer and GlmS as a monomer. Adenosylcob(III)alamin serves as cofactor.

It carries out the reaction (2S,3S)-3-methyl-L-aspartate = L-glutamate. It functions in the pathway amino-acid degradation; L-glutamate degradation via mesaconate pathway; acetate and pyruvate from L-glutamate: step 1/4. Catalyzes the carbon skeleton rearrangement of L-glutamate to L-threo-3-methylaspartate ((2S,3S)-3-methylaspartate). The chain is Glutamate mutase sigma subunit from Escherichia coli O157:H7.